The sequence spans 238 residues: Ribonuclease PH (238 aa).

Residues arginine 86 and glycine 124 to arginine 126 each bind phosphate.

The protein belongs to the RNase PH family. Homohexameric ring arranged as a trimer of dimers.

It catalyses the reaction tRNA(n+1) + phosphate = tRNA(n) + a ribonucleoside 5'-diphosphate. In terms of biological role, phosphorolytic 3'-5' exoribonuclease that plays an important role in tRNA 3'-end maturation. Removes nucleotide residues following the 3'-CCA terminus of tRNAs; can also add nucleotides to the ends of RNA molecules by using nucleoside diphosphates as substrates, but this may not be physiologically important. Probably plays a role in initiation of 16S rRNA degradation (leading to ribosome degradation) during starvation. The chain is Ribonuclease PH from Geobacter metallireducens (strain ATCC 53774 / DSM 7210 / GS-15).